We begin with the raw amino-acid sequence, 283 residues long: ATP synthase gamma chain (283 aa).

This sequence belongs to the ATPase gamma chain family. F-type ATPases have 2 components, CF(1) - the catalytic core - and CF(0) - the membrane proton channel. CF(1) has five subunits: alpha(3), beta(3), gamma(1), delta(1), epsilon(1). CF(0) has three main subunits: a, b and c.

It is found in the cell inner membrane. In terms of biological role, produces ATP from ADP in the presence of a proton gradient across the membrane. The gamma chain is believed to be important in regulating ATPase activity and the flow of protons through the CF(0) complex. The chain is ATP synthase gamma chain from Ehrlichia ruminantium (strain Welgevonden).